The following is a 380-amino-acid chain: Cytochrome b (380 aa).

4 helical membrane passes run 34 to 54 (FGSL…FLAM), 78 to 99 (WLIR…YLHI), 114 to 134 (WNIG…GYVL), and 179 to 199 (FFTF…IHLL). Residues His-84 and His-98 each contribute to the heme b site. Heme b contacts are provided by His-183 and His-197. Residue His-202 participates in a ubiquinone binding. Helical transmembrane passes span 227 to 247 (YKDL…ALFT), 289 to 309 (LGGV…PILH), 321 to 341 (ITQI…WIGG), and 348 to 368 (FITI…ILFP).

It belongs to the cytochrome b family. The cytochrome bc1 complex contains 3 respiratory subunits (MT-CYB, CYC1 and UQCRFS1), 2 core proteins (UQCRC1 and UQCRC2) and probably 6 low-molecular weight proteins. Requires heme b as cofactor.

The protein resides in the mitochondrion inner membrane. In terms of biological role, component of the ubiquinol-cytochrome c reductase complex (complex III or cytochrome b-c1 complex) that is part of the mitochondrial respiratory chain. The b-c1 complex mediates electron transfer from ubiquinol to cytochrome c. Contributes to the generation of a proton gradient across the mitochondrial membrane that is then used for ATP synthesis. The polypeptide is Cytochrome b (mt-cyb) (Hemitrygon laosensis (Mekong freshwater stingray)).